The sequence spans 462 residues: Toxin CqTX-A (462 aa).

Residues 1–19 form the signal peptide; that stretch reads MANMLYFSLLALLFMTGIA. A glycan (N-linked (GlcNAc...) asparagine) is linked at asparagine 174.

It belongs to the jellyfish toxin family. Type I subfamily. Contains disulfide bonds. In terms of processing, N-glycosylated.

The protein localises to the secreted. It localises to the nematocyst. The protein resides in the target cell membrane. Its function is as follows. Critical allergen and main toxic protein of C.quadrigatus venom. Has potent hemolytic activity. Is lethal to crayfish. Causes cutaneous inflammation in humans. May act as a pore-forming toxin, disrupting normal transmembrane ion concentration gradients in susceptible cells. This chain is Toxin CqTX-A, found in Chiropsoides quadrigatus (Box jellyfish).